The chain runs to 786 residues: LPS-assembly protein LptD (786 aa).

Positions 1–24 (MKKRIPTLLATMIASALYSHQGLA) are cleaved as a signal peptide. Disulfide bonds link C31–C726 and C173–C727.

This sequence belongs to the LptD family. As to quaternary structure, component of the lipopolysaccharide transport and assembly complex. Interacts with LptE and LptA. Contains two intramolecular disulfide bonds.

The protein localises to the cell outer membrane. Together with LptE, is involved in the assembly of lipopolysaccharide (LPS) at the surface of the outer membrane. In Salmonella typhimurium (strain LT2 / SGSC1412 / ATCC 700720), this protein is LPS-assembly protein LptD.